A 480-amino-acid chain; its full sequence is Bifunctional protein HldE (480 aa).

Residues 1-316 are ribokinase; that stretch reads MNMHDFSKTK…EQLNASMRHQ (316 aa). 192–195 contacts ATP; sequence NQGE. The active site involves Asp-261. The tract at residues 342–480 is cytidylyltransferase; sequence FTNGCFDLLH…EAEIKEGAAQ (139 aa).

In the N-terminal section; belongs to the carbohydrate kinase PfkB family. The protein in the C-terminal section; belongs to the cytidylyltransferase family. In terms of assembly, homodimer.

The enzyme catalyses D-glycero-beta-D-manno-heptose 7-phosphate + ATP = D-glycero-beta-D-manno-heptose 1,7-bisphosphate + ADP + H(+). It catalyses the reaction D-glycero-beta-D-manno-heptose 1-phosphate + ATP + H(+) = ADP-D-glycero-beta-D-manno-heptose + diphosphate. It functions in the pathway nucleotide-sugar biosynthesis; ADP-L-glycero-beta-D-manno-heptose biosynthesis; ADP-L-glycero-beta-D-manno-heptose from D-glycero-beta-D-manno-heptose 7-phosphate: step 1/4. The protein operates within nucleotide-sugar biosynthesis; ADP-L-glycero-beta-D-manno-heptose biosynthesis; ADP-L-glycero-beta-D-manno-heptose from D-glycero-beta-D-manno-heptose 7-phosphate: step 3/4. In terms of biological role, catalyzes the phosphorylation of D-glycero-D-manno-heptose 7-phosphate at the C-1 position to selectively form D-glycero-beta-D-manno-heptose-1,7-bisphosphate. Its function is as follows. Catalyzes the ADP transfer from ATP to D-glycero-beta-D-manno-heptose 1-phosphate, yielding ADP-D-glycero-beta-D-manno-heptose. This chain is Bifunctional protein HldE, found in Hydrogenovibrio crunogenus (strain DSM 25203 / XCL-2) (Thiomicrospira crunogena).